Reading from the N-terminus, the 302-residue chain is MNVSVVTERRTPAYSSLAAGELNGLVARALLTEARLTPKPGLVDIRNSGAHRDMDLAAFERSTTAIAPWMEKFFIMGNNTAALAAENVLVMLRPLGMACENDMLQATNGVNTHRGAIFAFGLLSAAIGRLLARGEPLEQNRICDQVARLSRNIVAHELSAKKAGKLTKSETHFQCYGLSGARGEAESGFRTVRTQALPVFNRVVQEHDDTHLALLQTLLHLMAWNDDTNLVSRGGLEGLYYVQQQAQKLLWQGGVLVEGGIEAMQSLDDELILRNLSPGGSADLLAVTWFLSHFPAGSLYPE.

The protein belongs to the CitG/MdcB family.

The catalysed reaction is 3'-dephospho-CoA + ATP = 2'-(5''-triphospho-alpha-D-ribosyl)-3'-dephospho-CoA + adenine. The polypeptide is Probable 2-(5''-triphosphoribosyl)-3'-dephosphocoenzyme-A synthase 1 (Salmonella typhimurium (strain LT2 / SGSC1412 / ATCC 700720)).